A 139-amino-acid polypeptide reads, in one-letter code: Putative pre-16S rRNA nuclease (139 aa).

Belongs to the YqgF nuclease family.

It is found in the cytoplasm. In terms of biological role, could be a nuclease involved in processing of the 5'-end of pre-16S rRNA. The sequence is that of Putative pre-16S rRNA nuclease from Bacillus licheniformis (strain ATCC 14580 / DSM 13 / JCM 2505 / CCUG 7422 / NBRC 12200 / NCIMB 9375 / NCTC 10341 / NRRL NRS-1264 / Gibson 46).